The primary structure comprises 450 residues: Sorting nexin-4 (450 aa).

M1 bears the N-acetylmethionine mark. The segment at 1–46 (MEQAPPDPERQLQPAPLEPLGSPDAGLGAAVGKEAEGAGEESSGVD) is disordered. At S22 the chain carries Phosphoserine. In terms of domain architecture, PX spans 61–187 (SVSEAEKRTG…YLFLTQEGNW (127 aa)). 4 residues coordinate a 1,2-diacyl-sn-glycero-3-phospho-(1D-myo-inositol-3-phosphate): R106, S108, K132, and R154.

It belongs to the sorting nexin family. Heterodimer; heterodimerizes with SNX7 or SNX30. Interacts with WWC1/KIBRA. Identified in a complex with WWC1/KIBRA and dynein components DYNLL1 and DYNC1I2. Interacts with BIN1.

It is found in the early endosome membrane. Functionally, involved in the regulation of endocytosis and in several stages of intracellular trafficking. Plays a role in recycling endocytosed transferrin receptor and prevent its degradation. Involved in autophagosome assembly by regulating trafficking and recycling of phospholipid scramblase ATG9A. The protein is Sorting nexin-4 of Homo sapiens (Human).